A 270-amino-acid chain; its full sequence is Phosphatidate cytidylyltransferase (270 aa).

Transmembrane regions (helical) follow at residues 19-39 (LWLT…IGLA), 53-73 (TAFS…LLIL), 76-96 (GALL…VTQW), 101-121 (GWPA…SLLR), 126-146 (FGFT…ITAY), 183-203 (LVAS…ALLL), and 248-268 (ALLY…AIFF).

It belongs to the CDS family.

The protein localises to the cell inner membrane. The catalysed reaction is a 1,2-diacyl-sn-glycero-3-phosphate + CTP + H(+) = a CDP-1,2-diacyl-sn-glycerol + diphosphate. The protein operates within phospholipid metabolism; CDP-diacylglycerol biosynthesis; CDP-diacylglycerol from sn-glycerol 3-phosphate: step 3/3. In Brucella abortus (strain 2308), this protein is Phosphatidate cytidylyltransferase (cdsA).